The following is a 346-amino-acid chain: 3-dehydroquinate synthase (346 aa).

NAD(+) is bound by residues aspartate 61–lysine 66, glycine 95–aspartate 99, threonine 119–threonine 120, lysine 132, and lysine 141. Residues glutamate 174, histidine 233, and histidine 250 each contribute to the Zn(2+) site.

The protein belongs to the sugar phosphate cyclases superfamily. Dehydroquinate synthase family. It depends on NAD(+) as a cofactor. Requires Co(2+) as cofactor. The cofactor is Zn(2+).

The protein resides in the cytoplasm. It carries out the reaction 7-phospho-2-dehydro-3-deoxy-D-arabino-heptonate = 3-dehydroquinate + phosphate. The protein operates within metabolic intermediate biosynthesis; chorismate biosynthesis; chorismate from D-erythrose 4-phosphate and phosphoenolpyruvate: step 2/7. Functionally, catalyzes the conversion of 3-deoxy-D-arabino-heptulosonate 7-phosphate (DAHP) to dehydroquinate (DHQ). In Wolinella succinogenes (strain ATCC 29543 / DSM 1740 / CCUG 13145 / JCM 31913 / LMG 7466 / NCTC 11488 / FDC 602W) (Vibrio succinogenes), this protein is 3-dehydroquinate synthase.